Here is a 476-residue protein sequence, read N- to C-terminus: Probable rhodanese domain-containing dual specificity protein phosphatase (476 aa).

Residues 32–190 (IGSSKIIIDL…FQKDYSFMCN (159 aa)) form the Rhodanese domain. The Tyrosine-protein phosphatase domain maps to 208-350 (YPSEIIKDFL…LKDYQQHLTL (143 aa)). Cys294 functions as the Phosphocysteine intermediate in the catalytic mechanism. Low complexity predominate over residues 425–436 (KTTTSSTTINNK). Residues 425–476 (KTTTSSTTINNKGQQQDKAQEEKDSIFSYADKQEKMTHPTLHSPIELPQSSL) are disordered. Positions 442 to 461 (KAQEEKDSIFSYADKQEKMT) are enriched in basic and acidic residues.

Belongs to the protein-tyrosine phosphatase family. Non-receptor class dual specificity subfamily.

It carries out the reaction O-phospho-L-tyrosyl-[protein] + H2O = L-tyrosyl-[protein] + phosphate. It catalyses the reaction O-phospho-L-seryl-[protein] + H2O = L-seryl-[protein] + phosphate. The enzyme catalyses O-phospho-L-threonyl-[protein] + H2O = L-threonyl-[protein] + phosphate. In terms of biological role, has a dual specificity toward Ser/Thr and Tyr-containing proteins. The protein is Probable rhodanese domain-containing dual specificity protein phosphatase of Dictyostelium discoideum (Social amoeba).